A 431-amino-acid polypeptide reads, in one-letter code: Ribosome assembly protein SQT1 (431 aa).

WD repeat units lie at residues 63–102, 107–146, 149–192, 199–243, 309–348, and 350–387; these read KHTD…PKFA, GYGE…AQWK, SQMQ…GSLE, VHQQ…QLFK, ELDA…VRHK, and VLED…EKFV.

As to quaternary structure, interacts strongly with QSR1. Part of an oligomeric protein complex that is loosely associated with ribosomes.

Its function is as follows. May be involved in the late step of 60S ribosomal subunit assembly or modification in the cytoplasm. This is Ribosome assembly protein SQT1 (SQT1) from Saccharomyces cerevisiae (strain ATCC 204508 / S288c) (Baker's yeast).